Here is a 317-residue protein sequence, read N- to C-terminus: Multivesicular body subunit 12B (317 aa).

Residues 1 to 49 (MRSCFCVRRSRDPPPPQPPPPQRGTDQATMPEVKELSEALPETPMDPIT) are disordered. A compositionally biased stretch (pro residues) spans 13–22 (PPPPQPPPPQ). The MABP domain maps to 45–191 (MDPITGVGVV…SMGIWYRMGR (147 aa)). The residue at position 99 (Ser99) is a Phosphoserine. 3 positions are modified to phosphothreonine: Thr120, Thr202, and Thr203. Residues 193 to 218 (PRNHDSSQPTTPSQSSASSTPAPNLP) form a disordered region. Low complexity predominate over residues 198 to 214 (SSQPTTPSQSSASSTPA). Residue Ser222 is modified to Phosphoserine. In terms of domain architecture, UMA spans 252 to 301 (MDGVPFMISEKFSCIPESMQPFDLLGITIKSLAEIEKEYEYSFRTEQSAA). A disordered region spans residues 297 to 317 (EQSAAARLPPSPTRCQQIPQS). Ser307 carries the post-translational modification Phosphoserine.

Belongs to the MVB12 family. As to quaternary structure, component of the ESCRT-I complex (endosomal sorting complex required for transport I) which consists of TSG101, VPS28, a VPS37 protein (VPS37A to -D) and MVB12A or MVB12B in a 1:1:1:1 stoichiometry. Interacts with TSG101; the association appears to be mediated by the TSG101-VPS37 binary subcomplex. Interacts with VPS28. Interacts with VPS37B; the association appears to be mediated by the TSG101-VPS37 binary subcomplex. Interacts with VPS37C; the association appears to be mediated by the TSG101-VPS37 binary subcomplex.

Its subcellular location is the endosome. It localises to the late endosome membrane. In terms of biological role, component of the ESCRT-I complex, a regulator of vesicular trafficking process. Required for the sorting of endocytic ubiquitinated cargos into multivesicular bodies. The chain is Multivesicular body subunit 12B (Mvb12b) from Mus musculus (Mouse).